Consider the following 475-residue polypeptide: Ribulose bisphosphate carboxylase large chain (475 aa).

Positions 1–2 are excised as a propeptide; sequence MA. The residue at position 3 (Pro3) is an N-acetylproline. Positions 123 and 173 each coordinate substrate. Residue Lys175 is the Proton acceptor of the active site. Lys177 contributes to the substrate binding site. Residues Lys201, Asp203, and Glu204 each coordinate Mg(2+). Lys201 carries the N6-carboxylysine modification. The active-site Proton acceptor is His294. Substrate contacts are provided by Arg295, His327, and Ser379.

Belongs to the RuBisCO large chain family. Type I subfamily. As to quaternary structure, heterohexadecamer of 8 large chains and 8 small chains. It depends on Mg(2+) as a cofactor.

It localises to the plastid. The protein resides in the chloroplast. The enzyme catalyses 2 (2R)-3-phosphoglycerate + 2 H(+) = D-ribulose 1,5-bisphosphate + CO2 + H2O. It carries out the reaction D-ribulose 1,5-bisphosphate + O2 = 2-phosphoglycolate + (2R)-3-phosphoglycerate + 2 H(+). Its function is as follows. RuBisCO catalyzes two reactions: the carboxylation of D-ribulose 1,5-bisphosphate, the primary event in carbon dioxide fixation, as well as the oxidative fragmentation of the pentose substrate in the photorespiration process. Both reactions occur simultaneously and in competition at the same active site. The sequence is that of Ribulose bisphosphate carboxylase large chain from Ostreococcus tauri.